The sequence spans 353 residues: MNGTEGDNFYVPFSNKTGLARSPYEYPQYYLAEPWKYSALAAYMFFLILVGFPVNFLTLFVTVQHKKLRTPLNYILLNLAMANLFMVLFGFTVTMYTSMNGYFVFGPTMCSIEGFFATLGGEVALWSLVVLAIERYIVICKPMGNFRFGNTHAIMGVAFTWIMALACAAPPLVGWSRYIPEGMQCSCGPDYYTLNPNFNNESYVVYMFVVHFLVPFVIIFFCYGRLLCTVKEAAAAQQESASTQKAEKEVTRMVVLMVIGFLVCWVPYASVAFYIFTHQGSDFGATFMTLPAFFAKSSALYNPVIYILMNKQFRNCMITTLCCGKNPLGDDESGASTSKTEVSSVSTSPVSPA.

Over 1-36 (MNGTEGDNFYVPFSNKTGLARSPYEYPQYYLAEPWK) the chain is Extracellular. N-linked (GlcNAc...) asparagine glycosylation is found at N2 and N15. The chain crosses the membrane as a helical span at residues 37–61 (YSALAAYMFFLILVGFPVNFLTLFV). The Cytoplasmic segment spans residues 62 to 73 (TVQHKKLRTPLN). A helical transmembrane segment spans residues 74 to 96 (YILLNLAMANLFMVLFGFTVTMY). The Extracellular portion of the chain corresponds to 97–110 (TSMNGYFVFGPTMC). Cysteines 110 and 187 form a disulfide. The chain crosses the membrane as a helical span at residues 111–133 (SIEGFFATLGGEVALWSLVVLAI). The 'Ionic lock' involved in activated form stabilization motif lies at 134 to 136 (ERY). Topologically, residues 134–152 (ERYIVICKPMGNFRFGNTH) are cytoplasmic. The helical transmembrane segment at 153 to 173 (AIMGVAFTWIMALACAAPPLV) threads the bilayer. The Extracellular segment spans residues 174-202 (GWSRYIPEGMQCSCGPDYYTLNPNFNNES). A helical transmembrane segment spans residues 203–224 (YVVYMFVVHFLVPFVIIFFCYG). Over 225–252 (RLLCTVKEAAAAQQESASTQKAEKEVTR) the chain is Cytoplasmic. A helical transmembrane segment spans residues 253-274 (MVVLMVIGFLVCWVPYASVAFY). Residues 275–286 (IFTHQGSDFGAT) are Extracellular-facing. The chain crosses the membrane as a helical span at residues 287 to 308 (FMTLPAFFAKSSALYNPVIYIL). Residue K296 is modified to N6-(retinylidene)lysine. Residues 309–353 (MNKQFRNCMITTLCCGKNPLGDDESGASTSKTEVSSVSTSPVSPA) lie on the Cytoplasmic side of the membrane. The disordered stretch occupies residues 330 to 353 (DDESGASTSKTEVSSVSTSPVSPA). The segment covering 336-353 (STSKTEVSSVSTSPVSPA) has biased composition (low complexity).

Belongs to the G-protein coupled receptor 1 family. Opsin subfamily. Phosphorylated on some or all of the serine and threonine residues present in the C-terminal region. Post-translationally, contains one covalently linked retinal chromophore. Short photoreceptor cells.

The protein resides in the membrane. Its subcellular location is the cell projection. It localises to the cilium. The protein localises to the photoreceptor outer segment. In terms of biological role, photoreceptor required for image-forming vision at low light intensity. While most salt water fish species use retinal as chromophore, most freshwater fish use 3-dehydroretinal, or a mixture of retinal and 3-dehydroretinal. Light-induced isomerization of 11-cis to all-trans retinal triggers a conformational change that activates signaling via G-proteins. Subsequent receptor phosphorylation mediates displacement of the bound G-protein alpha subunit by arrestin and terminates signaling. This is Rhodopsin (RHO) from Lethenteron camtschaticum (Japanese lamprey).